The following is a 154-amino-acid chain: Deoxyuridine 5'-triphosphate nucleotidohydrolase (154 aa).

Substrate contacts are provided by residues 72–74, N85, 89–91, and M99; these read RSG and LID.

This sequence belongs to the dUTPase family. Mg(2+) is required as a cofactor.

It carries out the reaction dUTP + H2O = dUMP + diphosphate + H(+). Its pathway is pyrimidine metabolism; dUMP biosynthesis; dUMP from dCTP (dUTP route): step 2/2. Functionally, this enzyme is involved in nucleotide metabolism: it produces dUMP, the immediate precursor of thymidine nucleotides and it decreases the intracellular concentration of dUTP so that uracil cannot be incorporated into DNA. The protein is Deoxyuridine 5'-triphosphate nucleotidohydrolase of Psychrobacter cryohalolentis (strain ATCC BAA-1226 / DSM 17306 / VKM B-2378 / K5).